The primary structure comprises 1138 residues: Lysylphosphatidylglycerol biosynthesis bifunctional protein LysX (1138 aa).

Residues 1 to 15 (MALDTPSSDLPVSTD) are compositionally biased toward polar residues. The segment at 1 to 34 (MALDTPSSDLPVSTDDTAEHQPTPAHRPPSAADR) is disordered. Residues 1 to 646 (MALDTPSSDL…LIAQLESEED (646 aa)) are phosphatidylglycerol lysyltransferase. Helical transmembrane passes span 56–76 (IAGT…IFPL), 92–112 (IVSL…VAIA), 119–139 (IAWW…ALLL), 155–175 (IQIW…IVTY), 190–210 (ALGV…GLVW), and 247–267 (IVID…AATV). The lysine--tRNA ligase stretch occupies residues 647–1138 (RTAVEVHRPE…AFPMVKPTDA (492 aa)). A DNA-binding region (OB) is located at residues 698–772 (VTIAGRVTKM…GELSVLIDAW (75 aa)). Mg(2+) is bound by residues aspartate 1048 and glutamate 1055.

The protein in the N-terminal section; belongs to the LPG synthetase family. This sequence in the C-terminal section; belongs to the class-II aminoacyl-tRNA synthetase family. Requires Mg(2+) as cofactor.

Its subcellular location is the cell membrane. The enzyme catalyses tRNA(Lys) + L-lysine + ATP = L-lysyl-tRNA(Lys) + AMP + diphosphate. It carries out the reaction L-lysyl-tRNA(Lys) + a 1,2-diacyl-sn-glycero-3-phospho-(1'-sn-glycerol) = a 1,2-diacyl-sn-glycero-3-phospho-1'-(3'-O-L-lysyl)-sn-glycerol + tRNA(Lys). Its function is as follows. Catalyzes the production of L-lysyl-tRNA(Lys)transfer and the transfer of a lysyl group from L-lysyl-tRNA(Lys) to membrane-bound phosphatidylglycerol (PG), which produces lysylphosphatidylglycerol (LPG), one of the components of the bacterial membrane with a positive net charge. LPG synthesis contributes to the resistance to cationic antimicrobial peptides (CAMPs) and likely protects M.tuberculosis against the CAMPs produced by competiting microorganisms (bacteriocins). In fact, the modification of anionic phosphatidylglycerol with positively charged L-lysine results in repulsion of the peptides. In Gordonia bronchialis (strain ATCC 25592 / DSM 43247 / BCRC 13721 / JCM 3198 / KCTC 3076 / NBRC 16047 / NCTC 10667) (Rhodococcus bronchialis), this protein is Lysylphosphatidylglycerol biosynthesis bifunctional protein LysX (lysX).